We begin with the raw amino-acid sequence, 1020 residues long: Fanconi-associated nuclease 1 (1020 aa).

The segment covering 1–11 (MPSQRKSPDQK) has biased composition (basic and acidic residues). A disordered region spans residues 1–24 (MPSQRKSPDQKRPRRSLSTSKTAK). The short motif at 14 to 22 (RRSLSTSKT) is the D-box element. The UBZ4-type zinc finger occupies 41 to 69 (KLACSTCHKMVPRYDLIRHLDESCANNGV). Residues Cys44, Cys47, His59, and Cys64 each coordinate Zn(2+). A disordered region spans residues 173–208 (KNEGLASQCPQTSPSTPGTSLTDNCPEMEDKDEVLN). Residues 180–195 (QCPQTSPSTPGTSLTD) are compositionally biased toward polar residues. Residues 212-214 (KEN) carry the KEN box motif. Residues 224 to 242 (ENASEQKVKNNKITGDESQ) show a composition bias toward basic and acidic residues. 2 disordered regions span residues 224–252 (ENASEQKVKNNKITGDESQKASCGEPALT) and 269–288 (LVSNTKSSPGDTLVKQESAR). Polar residues predominate over residues 269 to 278 (LVSNTKSSPG). The stretch at 673-737 (SSRAVEVLER…AIRCIREGLA (65 aa)) forms a coiled coil. Positions 837, 963, 978, and 979 each coordinate Mn(2+). One can recognise a VRR-NUC domain in the interval 898–1010 (AESLRAWVGE…GADVEVCHVV (113 aa)).

Belongs to the FAN1 family. In terms of assembly, interacts with FANCD2 (when monoubiquitinated). Interacts with FANCI, MLH1, MLH3 and PMS2. The cofactor is Mn(2+). Mg(2+) is required as a cofactor. In terms of processing, ubiquitinated and degraded during mitotic exit by the APC/C-Cdh1 complex.

The protein localises to the nucleus. It carries out the reaction Hydrolytically removes 5'-nucleotides successively from the 3'-hydroxy termini of 3'-hydroxy-terminated oligonucleotides.. Functionally, nuclease required for the repair of DNA interstrand cross-links (ICL) recruited at sites of DNA damage by monoubiquitinated FANCD2. Specifically involved in repair of ICL-induced DNA breaks by being required for efficient homologous recombination, probably in the resolution of homologous recombination intermediates. Not involved in DNA double-strand breaks resection. Acts as a 5'-3' exonuclease that anchors at a cut end of DNA and cleaves DNA successively at every third nucleotide, allowing to excise an ICL from one strand through flanking incisions. Probably keeps excising with 3'-flap annealing until it reaches and unhooks the ICL. Acts at sites that have a 5'-terminal phosphate anchor at a nick or a 1- or 2-nucleotide flap and is augmented by a 3' flap. Also has endonuclease activity toward 5'-flaps. The chain is Fanconi-associated nuclease 1 from Mus musculus (Mouse).